A 264-amino-acid chain; its full sequence is Aminoglycoside 3'-phosphotransferase (264 aa).

D190 acts as the Proton acceptor in catalysis.

The protein belongs to the aminoglycoside phosphotransferase family.

The enzyme catalyses kanamycin A + ATP = kanamycin 3'-phosphate + ADP + H(+). In terms of biological role, resistance to kanamycin and structurally-related aminoglycosides, including amikacin. This is Aminoglycoside 3'-phosphotransferase (aphA) from Enterococcus faecalis (Streptococcus faecalis).